The following is a 327-amino-acid chain: DNA-directed RNA polymerase subunit alpha (327 aa).

The interval 1 to 231 (MIYQMQMPAK…DHVLLFADFS (231 aa)) is alpha N-terminal domain (alpha-NTD). The interval 247–327 (DEFETMRRLL…GMDITRYQMK (81 aa)) is alpha C-terminal domain (alpha-CTD).

This sequence belongs to the RNA polymerase alpha chain family. In terms of assembly, homodimer. The RNAP catalytic core consists of 2 alpha, 1 beta, 1 beta' and 1 omega subunit. When a sigma factor is associated with the core the holoenzyme is formed, which can initiate transcription.

It catalyses the reaction RNA(n) + a ribonucleoside 5'-triphosphate = RNA(n+1) + diphosphate. Functionally, DNA-dependent RNA polymerase catalyzes the transcription of DNA into RNA using the four ribonucleoside triphosphates as substrates. In Chlorobium chlorochromatii (strain CaD3), this protein is DNA-directed RNA polymerase subunit alpha.